The sequence spans 565 residues: Sulfite reductase [NADPH] hemoprotein beta-component (565 aa).

[4Fe-4S] cluster is bound by residues Cys-429, Cys-435, Cys-474, and Cys-478. A siroheme-binding site is contributed by Cys-478.

The protein belongs to the nitrite and sulfite reductase 4Fe-4S domain family. Alpha(8)-beta(8). The alpha component is a flavoprotein, the beta component is a hemoprotein. Siroheme serves as cofactor. The cofactor is [4Fe-4S] cluster.

The catalysed reaction is hydrogen sulfide + 3 NADP(+) + 3 H2O = sulfite + 3 NADPH + 4 H(+). Its pathway is sulfur metabolism; hydrogen sulfide biosynthesis; hydrogen sulfide from sulfite (NADPH route): step 1/1. In terms of biological role, component of the sulfite reductase complex that catalyzes the 6-electron reduction of sulfite to sulfide. This is one of several activities required for the biosynthesis of L-cysteine from sulfate. This chain is Sulfite reductase [NADPH] hemoprotein beta-component, found in Shewanella oneidensis (strain ATCC 700550 / JCM 31522 / CIP 106686 / LMG 19005 / NCIMB 14063 / MR-1).